The sequence spans 336 residues: Phospho-N-acetylmuramoyl-pentapeptide-transferase (336 aa).

The next 10 membrane-spanning stretches (helical) occupy residues 3–23 (LTLI…PYFI), 53–73 (GGTV…LFSI), 78–98 (SLAL…IGFL), 118–138 (LALQ…PSGI), 143–163 (VFGY…FWVV), 174–194 (GIDG…GVIA), 200–220 (FDVL…FCFN), 226–246 (VFMG…ISIA), 254–274 (LIIG…VFYF), and 316–336 (AFLW…LYVF).

Belongs to the glycosyltransferase 4 family. MraY subfamily. Mg(2+) serves as cofactor.

The protein localises to the cell membrane. The catalysed reaction is UDP-N-acetyl-alpha-D-muramoyl-L-alanyl-gamma-D-glutamyl-L-lysyl-D-alanyl-D-alanine + di-trans,octa-cis-undecaprenyl phosphate = Mur2Ac(oyl-L-Ala-gamma-D-Glu-L-Lys-D-Ala-D-Ala)-di-trans,octa-cis-undecaprenyl diphosphate + UMP. It participates in cell wall biogenesis; peptidoglycan biosynthesis. In terms of biological role, catalyzes the initial step of the lipid cycle reactions in the biosynthesis of the cell wall peptidoglycan: transfers peptidoglycan precursor phospho-MurNAc-pentapeptide from UDP-MurNAc-pentapeptide onto the lipid carrier undecaprenyl phosphate, yielding undecaprenyl-pyrophosphoryl-MurNAc-pentapeptide, known as lipid I. The chain is Phospho-N-acetylmuramoyl-pentapeptide-transferase from Streptococcus pyogenes serotype M18 (strain MGAS8232).